A 62-amino-acid chain; its full sequence is Metallothionein-4 (62 aa).

The a divalent metal cation site is built by C6, C8, C14, C16, C20, C22, C25, C27, C30, C34, C35, C37, C38, C42, C45, C49, C51, C58, C60, and C61.

Belongs to the metallothionein superfamily. Type 1 family.

Seems to bind zinc and copper. Could play a special role in regulating zinc metabolism during the differentiation of stratified epithelia. The protein is Metallothionein-4 (MT4) of Canis lupus familiaris (Dog).